We begin with the raw amino-acid sequence, 377 residues long: N5-carboxyaminoimidazole ribonucleotide synthase (377 aa).

Residues Arg-93, Lys-133, 138 to 144, 175 to 178, Glu-183, His-206, and 257 to 258 each bind ATP; these read GYDGKGQ, EEFV, and NE. Residues 97 to 287 form the ATP-grasp domain; the sequence is KALLDRAQVA…QFENHLRAVC (191 aa).

Belongs to the PurK/PurT family. In terms of assembly, homodimer.

The catalysed reaction is 5-amino-1-(5-phospho-beta-D-ribosyl)imidazole + hydrogencarbonate + ATP = 5-carboxyamino-1-(5-phospho-D-ribosyl)imidazole + ADP + phosphate + 2 H(+). It functions in the pathway purine metabolism; IMP biosynthesis via de novo pathway; 5-amino-1-(5-phospho-D-ribosyl)imidazole-4-carboxylate from 5-amino-1-(5-phospho-D-ribosyl)imidazole (N5-CAIR route): step 1/2. Its function is as follows. Catalyzes the ATP-dependent conversion of 5-aminoimidazole ribonucleotide (AIR) and HCO(3)(-) to N5-carboxyaminoimidazole ribonucleotide (N5-CAIR). This Vibrio cholerae serotype O1 (strain ATCC 39315 / El Tor Inaba N16961) protein is N5-carboxyaminoimidazole ribonucleotide synthase.